Here is a 60-residue protein sequence, read N- to C-terminus: L-amino-acid oxidase (60 aa).

1 to 4 provides a ligand contact to FAD; sequence GPMR. Residue Arg-4 participates in substrate binding.

The protein belongs to the flavin monoamine oxidase family. FIG1 subfamily. In terms of assembly, homodimer; non-covalently linked. The cofactor is FAD. Contains 2 disulfide bonds. Post-translationally, N-glycosylated. As to expression, expressed by the venom gland.

The protein resides in the secreted. It catalyses the reaction an L-alpha-amino acid + O2 + H2O = a 2-oxocarboxylate + H2O2 + NH4(+). Its function is as follows. Catalyzes an oxidative deamination of predominantly hydrophobic and aromatic L-amino acids, thus producing hydrogen peroxide that may contribute to the diverse toxic effects of this enzyme. Exhibits diverse biological activities, such as hemorrhage, hemolysis, edema, apoptosis of vascular endothelial cells or tumor cell lines, antibacterial and antiparasitic activities, as well as regulation of platelet aggregation. Effects of snake L-amino oxidases on platelets are controversial, since they either induce aggregation or inhibit agonist-induced aggregation. These different effects are probably due to different experimental conditions. The protein is L-amino-acid oxidase of Bitis gabonica (Gaboon adder).